The primary structure comprises 222 residues: Uracil-DNA glycosylase (222 aa).

Asp61 serves as the catalytic Proton acceptor.

The protein belongs to the uracil-DNA glycosylase (UDG) superfamily. UNG family.

The protein resides in the cytoplasm. It carries out the reaction Hydrolyzes single-stranded DNA or mismatched double-stranded DNA and polynucleotides, releasing free uracil.. In terms of biological role, excises uracil residues from the DNA which can arise as a result of misincorporation of dUMP residues by DNA polymerase or due to deamination of cytosine. The sequence is that of Uracil-DNA glycosylase from Aeromonas salmonicida (strain A449).